Here is an 84-residue protein sequence, read N- to C-terminus: Cell division topological specificity factor (84 aa).

The protein belongs to the MinE family.

Its function is as follows. Prevents the cell division inhibition by proteins MinC and MinD at internal division sites while permitting inhibition at polar sites. This ensures cell division at the proper site by restricting the formation of a division septum at the midpoint of the long axis of the cell. This chain is Cell division topological specificity factor, found in Paraburkholderia xenovorans (strain LB400).